The sequence spans 32 residues: MSATDFDSLYQLIFNAGLVICFGLGVISGGQR.

A helical membrane pass occupies residues 9 to 29; it reads LYQLIFNAGLVICFGLGVISG.

It belongs to the inovirus G7P protein family.

The protein localises to the virion. It is found in the host membrane. May initiate with G9P the virion concomitant assembly-budding process, by interacting with the packaging signal of the viral genome. The assembly-budding takes place at the host inner membrane. In turn, G7P and G9P are present at the end of the filamentous virion that emerges first from the bacterial host. The sequence is that of Tail virion protein G7P (VII) from Escherichia phage If1 (Bacteriophage If1).